Consider the following 447-residue polypeptide: Growth/differentiation factor 7 (447 aa).

The signal sequence occupies residues 1 to 19 (MDLSAAAALCLWLLSACRP). A propeptide spanning residues 20–318 (RDGLEAAAVL…AVTAGRRRRR (299 aa)) is cleaved from the precursor. The N-linked (GlcNAc...) asparagine glycan is linked to asparagine 80. A disordered region spans residues 292–346 (LAAQPPPDPGTGTGSPRAVTAGRRRRRTALAGTRTAQGSGGGAGRGHGRRGRSRC). Positions 337–346 (GHGRRGRSRC) are enriched in basic residues. Intrachain disulfides connect cysteine 346–cysteine 412, cysteine 375–cysteine 444, and cysteine 379–cysteine 446.

It belongs to the TGF-beta family. As to quaternary structure, homodimer; disulfide-linked. In terms of tissue distribution, highly expressed in the primary aera of brain neocortex.

It localises to the secreted. May play an active role in the motor area of the primate neocortex. In Chlorocebus aethiops (Green monkey), this protein is Growth/differentiation factor 7 (GDF7).